The chain runs to 398 residues: Chalcone synthase 1 (398 aa).

Lysine 58–lysine 65 is a binding site for CoA. Residue cysteine 167 is the Acyl-thioester intermediate of the active site. Substrate-binding positions include threonine 200 and glycine 219 to aspartate 220. Alanine 311 is a binding site for CoA.

This sequence belongs to the thiolase-like superfamily. Chalcone/stilbene synthases family. In terms of assembly, homodimer.

It catalyses the reaction (E)-4-coumaroyl-CoA + 3 malonyl-CoA + 3 H(+) = 2',4,4',6'-tetrahydroxychalcone + 3 CO2 + 4 CoA. The protein operates within secondary metabolite biosynthesis; flavonoid biosynthesis. The primary product of this enzyme is 4,2',4',6'-tetrahydroxychalcone (also termed naringenin-chalcone or chalcone) which can under specific conditions spontaneously isomerize into naringenin. The sequence is that of Chalcone synthase 1 (CHS1) from Oryza sativa subsp. japonica (Rice).